The chain runs to 274 residues: Centromere protein K (274 aa).

The segment at 1–21 is disordered; the sequence is MSGYQHELPPNISKTSPAPEE. Residues 96 to 159 are a coiled coil; that stretch reads KEELEKIAQE…NQLTAFSEKR (64 aa).

The protein belongs to the CENP-K/MCM22 family.

Its subcellular location is the nucleus. The protein resides in the chromosome. The protein localises to the centromere. It localises to the kinetochore. Its function is as follows. Probable component of a centromeric complex involved in assembly of kinetochore proteins, mitotic progression and chromosome segregation. In Xenopus laevis (African clawed frog), this protein is Centromere protein K (cenpk).